Here is a 72-residue protein sequence, read N- to C-terminus: Galensin (72 aa).

An N-terminal signal peptide occupies residues M1 to A22. Positions D23–R48 are excised as a propeptide. F71 carries the post-translational modification Phenylalanine amide.

The protein belongs to the frog skin active peptide (FSAP) family. Brevinin subfamily. In terms of assembly, homodimer; disulfide-linked. As to expression, expressed by the skin glands.

The protein resides in the secreted. In terms of biological role, antibacterial activity against the Gram-positive bacterium M.luteus and the Gram-negative bacterium E.coli. This is Galensin from Kassina senegalensis (Senegal running frog).